The sequence spans 1193 residues: MEDDLNTLAPLGPAAWLFVCPRQDEWCDVLAALSLCDRSSSVAIAPLLVDLTVDRDFQVAVRTPISRYEGGVLTKVTSMWPAAFVFHNAEAIVSRTEDHGDVGGLCAEARARFGVASYRAEAERADTDFTELWAALGVDGARVVMYAVVGYGLKELLYAGQLVPCVEEARTVLLGAVEAFKLPLYPATLFADGDATADGAAAVGLRSRTPFVDRRGLYVSALSEALFYYVFTALGQALRFGHTEHLIDEGMKQFLQDTQNSVKLAPQKRYYGYLSQKLTPGERDQLLLCDAIACELAFSFASVYFDSAYEPAPLMNYSEWPLVRAAEGHADLLRRLSELKLHLSAHVGALVFSGNSVLYQTRIAFFSAANKVPAGGTAQDGLLKAVQFCNGLTCLTEDALNDACRTVKFEGPGGGGGGRDEQFTPQHLAWACATSPHLMSDLVWYLNRLAIYNTGQNGGSALYEHLVHCAVNLCPACRGRCCQSCYQTAFVRIQTRLPPLPKQLKREPFVLTLFSRFLCDVDVLGTFGKRYAGDAKEPSAASLAAAPGEARKVGDEAGLGAGGGGPGGRLGVNVDRLKYFNQILDYCKRNSLIDPSTGEDTLAVRGRADFMSALSGLNRCVDEAAMALVSEVRMKSNRDEVAGATQAFNLDLNPYAVAFSPLLAHQYYRAFFLIVQNLALVSASSYVVDNPLTVSSLSRWLLQHFQSICGAFASNSARKGLLFTKDAKCSKSVEFERFMDFALYAASGRHVLLSTETKLCKLSVCMLRTCRVKNRPIPRGGKGLPVSVFFKRDVVQRRNPVRGCLAFLLYAFHERLFPGCGLSCLDFWQKVYHNALPKSVAIGKMEEFNAFVKYVLNVTTEYNEHDLIDVPPSNLLSYVEYRFHNKFLCFYGFGDYLSTLHGLSTKLVPQNHLNFPHLLAASPKFASVAEYVLYFKKLKLDGVPPPHVATFSRESLVRSVFENRSLVTVAFGIEKYSTSGGSREVFHFGQIGYFAGNGVERSLNVNSMGGGDYRYMRQRFVLATRLVDLLLRRSRRETVLFDADLLRTRVLAALESHDTQLDPELAAIAEIMDGRGGEPPEYEDVLFFVDGQECLAASIVGKIKELIKKGVEDFSLTALGADAGAGGGPAGSAGGPESGGGAGAAGGEGTYDLSALFLDVENECVVLEGPTAAALDGGGDGDECAFPAKRLRL.

Positions 827-828 (FW) match the Required for filament formation motif. A disordered region spans residues 1125-1145 (AGGGPAGSAGGPESGGGAGAA). Residues 1170-1193 (PTAAALDGGGDGDECAFPAKRLRL) are required for nuclear localization.

The protein belongs to the herpesviridae major DNA-binding protein family. In terms of assembly, homooligomers. Forms double-helical filaments necessary for the formation of replication compartments within the host nucleus. Interacts with the origin-binding protein. Interacts with the helicase primase complex; this interaction stimulates primer synthesis activity of the helicase-primase complex. Interacts with the DNA polymerase. Interacts with the alkaline exonuclease; this interaction increases its nuclease processivity.

It is found in the host nucleus. Functionally, plays several crucial roles in viral infection. Participates in the opening of the viral DNA origin to initiate replication by interacting with the origin-binding protein. May disrupt loops, hairpins and other secondary structures present on ssDNA to reduce and eliminate pausing of viral DNA polymerase at specific sites during elongation. Promotes viral DNA recombination by performing strand-transfer, characterized by the ability to transfer a DNA strand from a linear duplex to a complementary single-stranded DNA circle. Can also catalyze the renaturation of complementary single strands. Additionally, reorganizes the host cell nucleus, leading to the formation of prereplicative sites and replication compartments. This process is driven by the protein which can form double-helical filaments in the absence of DNA. In Tupaiid herpesvirus (strain 2) (TuHV-2), this protein is Major DNA-binding protein.